The sequence spans 194 residues: MTVGLFGGSFNPPHGGHALVAEIAIRRLKLDQLWWMVTPGNPLKDSRELASLSERLRLSEEVAEDPRIKVTALEAAFHVRYTADTLALIRNANPDVYFVWVMGADNLASFHRWQRWREIAQNFPIAIIDRPGSTLSYLSSRMAQTFSDSRLDERYAPVLARRMPPAWTFIHGPRSSLSSTALRKVQLKKAPSKK.

It belongs to the NadD family.

It carries out the reaction nicotinate beta-D-ribonucleotide + ATP + H(+) = deamido-NAD(+) + diphosphate. Its pathway is cofactor biosynthesis; NAD(+) biosynthesis; deamido-NAD(+) from nicotinate D-ribonucleotide: step 1/1. Its function is as follows. Catalyzes the reversible adenylation of nicotinate mononucleotide (NaMN) to nicotinic acid adenine dinucleotide (NaAD). This is Probable nicotinate-nucleotide adenylyltransferase from Brucella suis biovar 1 (strain 1330).